Reading from the N-terminus, the 809-residue chain is WD repeat protein iqw1 (809 aa).

5 WD repeats span residues 43 to 82 (GHTGCVNTLDWSADGEFLLSGSDDTRLIVWDVFNEYKPRH), 87 to 128 (GHVQ…EGGM), 141 to 180 (CALDSVKNIVPCDNGHTFLVCSEDGTARQYDIREPHVCNQ), 193 to 233 (PYRI…KSFR), and 241 to 295 (SPEK…LFHV). Residues 599 to 644 (SMYTGHSDLNDDDDDYQDEESYSYASDDDDESDEDSDEGPTLLSLR) form a disordered region. The segment covering 608-636 (NDDDDDYQDEESYSYASDDDDESDEDSDE) has biased composition (acidic residues). 2 WD repeats span residues 668 to 708 (CNVE…ILAI) and 711 to 750 (GDSEAVNVIEGHPRCPTLAVSGIDSTVKIFNTENTPPSGC).

In terms of assembly, interacts with ddb1.

It localises to the cytoplasm. Its function is as follows. Ligand-dependent coactivator of nuclear receptors that may function as a substrate receptor for CUL4-DDB1 E3 ubiquitin-protein ligase complex. The chain is WD repeat protein iqw1 (iqw1) from Schizosaccharomyces pombe (strain 972 / ATCC 24843) (Fission yeast).